A 311-amino-acid chain; its full sequence is Ribose-5-phosphate isomerase (311 aa).

Gly residues predominate over residues 22–32 (AGGAASGGGGN). Positions 22-67 (AGGAASGGGGNSWDLPGSHVRLPGRAQSGTRGGAGNTSTSCGDSNS) are disordered. Arg52 bears the Omega-N-methylarginine mark. Residues 57–67 (NTSTSCGDSNS) are compositionally biased toward polar residues. Ser106 is subject to Phosphoserine.

The protein belongs to the ribose 5-phosphate isomerase family.

The catalysed reaction is aldehydo-D-ribose 5-phosphate = D-ribulose 5-phosphate. The protein operates within carbohydrate degradation; pentose phosphate pathway; D-ribose 5-phosphate from D-ribulose 5-phosphate (non-oxidative stage): step 1/1. Functionally, catalyzes the reversible conversion of ribose-5-phosphate to ribulose 5-phosphate and participates in the first step of the non-oxidative branch of the pentose phosphate pathway. The polypeptide is Ribose-5-phosphate isomerase (Homo sapiens (Human)).